A 257-amino-acid polypeptide reads, in one-letter code: Snake venom serine protease serpentokallikrein-2 (257 aa).

Positions 1–18 (MVLIRVLANLLILQLSYA) are cleaved as a signal peptide. A propeptide spanning residues 19–24 (QKSSEL) is cleaved from the precursor. One can recognise a Peptidase S1 domain in the interval 25 to 248 (VIGGDECNIN…HLDWIKGIIA (224 aa)). Disulfide bonds link cysteine 31-cysteine 162, cysteine 49-cysteine 65, cysteine 97-cysteine 255, cysteine 141-cysteine 209, cysteine 173-cysteine 188, and cysteine 199-cysteine 224. Histidine 64 serves as the catalytic Charge relay system. The N-linked (GlcNAc...) asparagine glycan is linked to asparagine 102. Catalysis depends on aspartate 109, which acts as the Charge relay system. Serine 203 (charge relay system) is an active-site residue.

Belongs to the peptidase S1 family. Snake venom subfamily. In terms of assembly, monomer. As to expression, expressed by the venom gland.

It is found in the secreted. Snake venom serine protease that may act in the hemostasis system of the prey. The sequence is that of Snake venom serine protease serpentokallikrein-2 from Protobothrops mucrosquamatus (Taiwan habu).